Here is a 229-residue protein sequence, read N- to C-terminus: Ion-translocating oxidoreductase complex subunit E (229 aa).

5 helical membrane-spanning segments follow: residues 58–78, 82–102, 105–125, 147–167, and 201–221; these read LGLG…ISLF, IPHD…VTTI, LMNA…PLIV, AFDG…LGAI, and GLLL…ILAV.

Belongs to the NqrDE/RnfAE family. The complex is composed of six subunits: RnfA, RnfB, RnfC, RnfD, RnfE and RnfG.

Its subcellular location is the cell inner membrane. In terms of biological role, part of a membrane-bound complex that couples electron transfer with translocation of ions across the membrane. The chain is Ion-translocating oxidoreductase complex subunit E from Glaesserella parasuis serovar 5 (strain SH0165) (Haemophilus parasuis).